A 174-amino-acid chain; its full sequence is MSSAAADHWAWLLVLSFVFGCNVLRILLPSFSSFMSRVLQKDAEQESQMRAEIQDMKQELSTVNMMDEFARYARLERKINKMTDKLKTHVKARTAQLAKIKWVISVAFYVLQAALMISLIWKYYSVPVAVVPSKWITPLDRLVAFPTRVAGGVGITCWILVCNKVVAIVLHPFS.

The Lumenal portion of the chain corresponds to 1–8 (MSSAAADH). A helical transmembrane segment spans residues 9 to 29 (WAWLLVLSFVFGCNVLRILLP). At 30–99 (SFSSFMSRVL…VKARTAQLAK (70 aa)) the chain is on the cytoplasmic side. Residues 39–94 (LQKDAEQESQMRAEIQDMKQELSTVNMMDEFARYARLERKINKMTDKLKTHVKART) adopt a coiled-coil conformation. Residues 39-97 (LQKDAEQESQMRAEIQDMKQELSTVNMMDEFARYARLERKINKMTDKLKTHVKARTAQL) form an interaction with GET3/TRC40 region. A helical membrane pass occupies residues 100–120 (IKWVISVAFYVLQAALMISLI). Residues 121–148 (WKYYSVPVAVVPSKWITPLDRLVAFPTR) lie on the Lumenal side of the membrane. Residues 149 to 169 (VAGGVGITCWILVCNKVVAIV) form a helical membrane-spanning segment. At 170–174 (LHPFS) the chain is on the cytoplasmic side.

The protein belongs to the WRB/GET1 family. Component of the Golgi to ER traffic (GET) complex, which is composed of GET1/WRB, CAMLG/GET2 and GET3/TRC40. Within the complex, GET1 and CAMLG form a heterotetramer which is stabilized by phosphatidylinositol binding and which binds to the GET3 homodimer. Interacts with CAMLG (via C-terminus). GET3 shows a higher affinity for CAMLG than for GET1.

The protein resides in the endoplasmic reticulum membrane. Required for the post-translational delivery of tail-anchored (TA) proteins to the endoplasmic reticulum (ER). Together with CAMLG/GET2, acts as a membrane receptor for soluble GET3/TRC40, which recognizes and selectively binds the transmembrane domain of TA proteins in the cytosol. Required to ensure correct topology and ER insertion of CAMLG. In Homo sapiens (Human), this protein is Guided entry of tail-anchored proteins factor 1.